Here is a 331-residue protein sequence, read N- to C-terminus: dTDP-glucose 4,6-dehydratase (331 aa).

NAD(+) is bound by residues 11–12 (FI), 33–36 (DALT), 57–58 (DI), 77–81 (FAAES), and Thr-96. Position 81 (Ser-81) interacts with substrate. Residue Thr-120 participates in substrate binding. Catalysis depends on Asp-121, which acts as the Proton donor. Catalysis depends on proton acceptor residues Glu-122 and Tyr-147. 147–151 (YSATK) serves as a coordination point for NAD(+). Residue Asn-176 participates in substrate binding. Asn-177 provides a ligand contact to NAD(+). Residues 186–191 (KFIPRQ), 202–204 (KLY), Arg-211, Asn-246, and 269–273 (DRVGH) contribute to the substrate site.

It belongs to the NAD(P)-dependent epimerase/dehydratase family. dTDP-glucose dehydratase subfamily. Homodimer. Requires NAD(+) as cofactor.

The catalysed reaction is dTDP-alpha-D-glucose = dTDP-4-dehydro-6-deoxy-alpha-D-glucose + H2O. The protein operates within carbohydrate biosynthesis; dTDP-L-rhamnose biosynthesis. Functionally, catalyzes the dehydration of dTDP-D-glucose to form dTDP-6-deoxy-D-xylo-4-hexulose via a three-step process involving oxidation, dehydration and reduction. Involved in the biosynthesis of the dTDP-L-rhamnose which is a component of the critical linker, D-N-acetylglucosamine-L-rhamnose disaccharide, which connects the galactan region of arabinogalactan to peptidoglycan via a phosphodiester linkage. This chain is dTDP-glucose 4,6-dehydratase (rmlB), found in Mycobacterium tuberculosis (strain CDC 1551 / Oshkosh).